Reading from the N-terminus, the 238-residue chain is Uracil-DNA glycosylase (238 aa).

Catalysis depends on Asp-72, which acts as the Proton acceptor.

It belongs to the uracil-DNA glycosylase (UDG) superfamily. UNG family.

Its subcellular location is the cytoplasm. It catalyses the reaction Hydrolyzes single-stranded DNA or mismatched double-stranded DNA and polynucleotides, releasing free uracil.. Its function is as follows. Excises uracil residues from the DNA which can arise as a result of misincorporation of dUMP residues by DNA polymerase or due to deamination of cytosine. The sequence is that of Uracil-DNA glycosylase from Chromobacterium violaceum (strain ATCC 12472 / DSM 30191 / JCM 1249 / CCUG 213 / NBRC 12614 / NCIMB 9131 / NCTC 9757 / MK).